A 636-amino-acid polypeptide reads, in one-letter code: MEGPAFSKPLKDKINPWGPLIILGILIRAGVSVQHDSPHQVFNVTWRVTNLMTGQTANATSLLGTMTDAFPKLYFDLCDLIGDDWDETGLGCRTPGGRKRARTFDFYVCPGHTVPTGCGGPREGYCGKWGCETTGQAYWKPSSSWDLISLKRGNTPRNQGPCYDSSVVSSGIQGATPGGRCNPLVLEFTDAGKKASWDGPKVWGLRLYRSTGIDPVTRFSLTRQVLNIGPRLPIGPNPVITGQLPPSRPVQIRLPRPPQPPPPGAASIVPETAPPSQQPGTGDRLLNLVDGAYQALNLTSPDKTQECWLCLVAGPPYYEGVAVLGTYSNHTSAPANCSVASQHKLTLSEVTGQGLCVGAVPKTHQALCNTTQKTSDGSYYLAAPAGTIWACNTGLTPCLSTTVLNLTTDYCVLVELWPKVTYHSPDYVYTQFEPGARFRREPVSLTLALLLGGLTMGGIAAGVGTGTTALVATQQFQQLQAAVHNDLKEVEKSITNLEKSLTSLSEVALQNRRGLDLLFLKEGGLCAALKEECCFYADHTGLVRDSMAKLRERLNQRQKLFESGQGWFEGLFNRSPWFTTLISTIMGPLIVLLLILLFGPCILNRLVQFVKDRISVVQALVLTQQYHQLKPIEYEP.

The first 32 residues, 1 to 32 (MEGPAFSKPLKDKINPWGPLIILGILIRAGVS), serve as a signal peptide directing secretion. The tract at residues 32-233 (SVQHDSPHQV…QVLNIGPRLP (202 aa)) is receptor-binding domain (RBD). The Extracellular segment spans residues 33-581 (VQHDSPHQVF…FNRSPWFTTL (549 aa)). Residues N43 and N58 are each glycosylated (N-linked (GlcNAc...) asparagine; by host). 2 cysteine pairs are disulfide-bonded: C109–C126 and C118–C131. Residues 254 to 282 (LPRPPQPPPPGAASIVPETAPPSQQPGTG) form a disordered region. Residues 255–264 (PRPPQPPPPG) show a composition bias toward pro residues. N297 carries an N-linked (GlcNAc...) asparagine; by host glycan. 6 disulfide bridges follow: C307–C310, C307–C534, C337–C391, C356–C368, C398–C411, and C526–C533. Residues 307–310 (CWLC) carry the CXXC motif. N329 and N336 each carry an N-linked (GlcNAc...) asparagine; by host glycan. N-linked (GlcNAc...) asparagine; by host glycosylation is found at N369 and N405. Residues 443–463 (VSLTLALLLGGLTMGGIAAGV) are fusion peptide. The stretch at 472–508 (ATQQFQQLQAAVHNDLKEVEKSITNLEKSLTSLSEVA) forms a coiled coil. The immunosuppression stretch occupies residues 509–525 (LQNRRGLDLLFLKEGGL). Positions 526–534 (CAALKEECC) match the CX6CC motif. The chain crosses the membrane as a helical span at residues 582–602 (ISTIMGPLIVLLLILLFGPCI). A lipid anchor (S-palmitoyl cysteine; by host) is attached at C601. Over 603 to 636 (LNRLVQFVKDRISVVQALVLTQQYHQLKPIEYEP) the chain is Cytoplasmic. The YXXL motif; contains endocytosis signal motif lies at 626-629 (YHQL).

The mature envelope protein (Env) consists of a trimer of SU-TM heterodimers attached by a labile interchain disulfide bond. Specific enzymatic cleavages in vivo yield mature proteins. Envelope glycoproteins are synthesized as an inactive precursor that is N-glycosylated and processed likely by host cell furin or by a furin-like protease in the Golgi to yield the mature SU and TM proteins. The cleavage site between SU and TM requires the minimal sequence [KR]-X-[KR]-R. The R-peptide is released from the C-terminus of the cytoplasmic tail of the TM protein upon particle formation as a result of proteolytic cleavage by the viral protease. Cleavage of this peptide is required for TM to become fusogenic. Post-translationally, the CXXC motif is highly conserved across a broad range of retroviral envelope proteins. It is thought to participate in the formation of a labile disulfide bond possibly with the CX6CC motif present in the transmembrane protein. Isomerization of the intersubunit disulfide bond to an SU intrachain disulfide bond is thought to occur upon receptor recognition in order to allow membrane fusion. In terms of processing, the transmembrane protein is palmitoylated. The R-peptide is palmitoylated.

It is found in the virion membrane. The protein localises to the host cell membrane. The surface protein (SU) attaches the virus to the host cell by binding to its receptor. This interaction triggers the refolding of the transmembrane protein (TM) and is thought to activate its fusogenic potential by unmasking its fusion peptide. Fusion occurs at the host cell plasma membrane. Functionally, the transmembrane protein (TM) acts as a class I viral fusion protein. Under the current model, the protein has at least 3 conformational states: pre-fusion native state, pre-hairpin intermediate state, and post-fusion hairpin state. During viral and target cell membrane fusion, the coiled coil regions (heptad repeats) assume a trimer-of-hairpins structure, positioning the fusion peptide in close proximity to the C-terminal region of the ectodomain. The formation of this structure appears to drive apposition and subsequent fusion of viral and target cell membranes. Membranes fusion leads to delivery of the nucleocapsid into the cytoplasm. This chain is Envelope glycoprotein (env), found in Mus musculus (Mouse).